The chain runs to 419 residues: RING finger protein 150 (419 aa).

The signal sequence occupies residues Met-1 to Ala-34. At Glu-35–Ser-197 the chain is on the extracellular side. The 103-residue stretch at Ser-70–Met-172 folds into the PA domain. Residues Val-198–Phe-218 form a helical membrane-spanning segment. The Cytoplasmic portion of the chain corresponds to Tyr-219–Cys-419. The RING-type; atypical zinc-finger motif lies at Cys-267–Lys-308. The segment at Ser-374–Cys-419 is disordered. Residues Pro-376–Ala-405 are compositionally biased toward polar residues.

It localises to the membrane. This chain is RING finger protein 150 (rnf150), found in Danio rerio (Zebrafish).